The sequence spans 314 residues: tRNA dimethylallyltransferase (314 aa).

Residue 6-13 (GPTAVGKT) coordinates ATP. 8 to 13 (TAVGKT) is a substrate binding site. The interaction with substrate tRNA stretch occupies residues 31–34 (DSRQ).

Belongs to the IPP transferase family. In terms of assembly, monomer. The cofactor is Mg(2+).

It catalyses the reaction adenosine(37) in tRNA + dimethylallyl diphosphate = N(6)-dimethylallyladenosine(37) in tRNA + diphosphate. Functionally, catalyzes the transfer of a dimethylallyl group onto the adenine at position 37 in tRNAs that read codons beginning with uridine, leading to the formation of N6-(dimethylallyl)adenosine (i(6)A). The sequence is that of tRNA dimethylallyltransferase from Pseudothermotoga lettingae (strain ATCC BAA-301 / DSM 14385 / NBRC 107922 / TMO) (Thermotoga lettingae).